We begin with the raw amino-acid sequence, 314 residues long: Nodulation protein D 1 (314 aa).

One can recognise an HTH lysR-type domain in the interval 6 to 63; it reads LDLNLLVALDALMTERNLTAAARKIHLSQPAMSAAVARLRTYFGDELFTMRGRELVPT. Residues 23-42 constitute a DNA-binding region (H-T-H motif); sequence LTAAARKIHLSQPAMSAAVA.

Belongs to the LysR transcriptional regulatory family.

In terms of biological role, nodD regulates the expression of the nodABCFE genes which encode other nodulation proteins. NodD is also a negative regulator of its own expression. Binds flavonoids as inducers. The chain is Nodulation protein D 1 (nodD1) from Bradyrhizobium sp. (strain NC92).